We begin with the raw amino-acid sequence, 1133 residues long: Lon protease homolog, mitochondrial (1133 aa).

Residues 1 to 37 (MLRTRTTKTLSTVARTTRAIQYYRSIAKTAAVSQRRF) constitute a mitochondrion transit peptide. The propeptide at 38–98 (ASTLTVRDVE…ATNSGKSILA (61 aa)) is removed in mature form; by autocatalysis. 2 stretches are compositionally biased toward basic and acidic residues: residues 98 to 117 (AKDD…VPDE) and 125 to 143 (EPTR…EASK). 2 disordered regions span residues 98 to 176 (AKDD…KDVP) and 282 to 358 (ELFP…LDDI). Over residues 145–166 (SRSSASGGGQSSSSRSDSGDGS) the composition is skewed to low complexity. In terms of domain architecture, Lon N-terminal spans 182–480 (MLALPIARRP…KSLLVLKKEL (299 aa)). Composition is skewed to basic and acidic residues over residues 282–301 (ELFP…KDTD) and 325–340 (KLED…SELQ). Acidic residues predominate over residues 348-358 (TEEESEELDDI). 632 to 639 (GPPGVGKT) is an ATP binding site. Positions 839–892 (KKLSIEDSPTSSADSKPKESVSSEEKAENNAKSSSEKTKDNNSEKTSDDIEALK) are dispensable for catalytic activity. A disordered region spans residues 844–889 (EDSPTSSADSKPKESVSSEEKAENNAKSSSEKTKDNNSEKTSDDIE). Positions 853 to 889 (SKPKESVSSEEKAENNAKSSSEKTKDNNSEKTSDDIE) are enriched in basic and acidic residues. The region spanning 923 to 1109 (TTPPGVVMGL…NDIFQKLFKD (187 aa)) is the Lon proteolytic domain. Active-site residues include Ser1015 and Lys1058.

It belongs to the peptidase S16 family. In terms of assembly, homohexamer. Organized in a ring with a central cavity. The ATP-binding and proteolytic domains (AP-domain) form a hexameric chamber. Oligomerization is independent of its proteolytic activity and the autocatalytic maturation of its subunits.

Its subcellular location is the mitochondrion matrix. It carries out the reaction Hydrolysis of proteins in presence of ATP.. In terms of biological role, ATP-dependent serine protease that mediates the selective degradation of misfolded, unassembled or oxidatively damaged polypeptides as well as certain short-lived regulatory proteins in the mitochondrial matrix. May also have a chaperone function in the assembly of inner membrane protein complexes. Participates in the regulation of mitochondrial gene expression and in the maintenance of the integrity of the mitochondrial genome. Binds to mitochondrial DNA in a site-specific manner. Endogenous substrates include ABF2, ACO2, ILV1, ILV2, LSC1, LYS4, MGM101 and several oxidized proteins. The 2 nucleic acid-binding proteins ABF2 and MGM101 are protected from degradation by PIM1 when they are bound to DNA. The polypeptide is Lon protease homolog, mitochondrial (Saccharomyces cerevisiae (strain ATCC 204508 / S288c) (Baker's yeast)).